The following is a 333-amino-acid chain: Ig gamma-2B chain C region (333 aa).

3 consecutive Ig-like domains span residues 6–96 (PSVY…KKVE), 124–223 (PSVF…KTIS), and 232–328 (PQVY…KSIS). Cystine bridges form between cysteine 27/cysteine 80, cysteine 147/cysteine 207, and cysteine 253/cysteine 311.

This chain is Ig gamma-2B chain C region (Igh-1a), found in Rattus norvegicus (Rat).